The sequence spans 102 residues: Putative pterin-4-alpha-carbinolamine dehydratase (102 aa).

The protein belongs to the pterin-4-alpha-carbinolamine dehydratase family.

It carries out the reaction (4aS,6R)-4a-hydroxy-L-erythro-5,6,7,8-tetrahydrobiopterin = (6R)-L-erythro-6,7-dihydrobiopterin + H2O. This chain is Putative pterin-4-alpha-carbinolamine dehydratase, found in Burkholderia vietnamiensis (strain G4 / LMG 22486) (Burkholderia cepacia (strain R1808)).